The chain runs to 604 residues: Sulfite reductase [NADPH] flavoprotein alpha-component (604 aa).

The region spanning 68–206 (LSIIFASQTG…PAAEWRKQAL (139 aa)) is the Flavodoxin-like domain. FMN contacts are provided by residues 74 to 79 (SQTGNA), 121 to 124 (STNG), and 157 to 166 (LGDSSYEFFC). In terms of domain architecture, FAD-binding FR-type spans 239 to 453 (QNPYTATLLT…VEHNNNFKLP (215 aa)). FAD-binding positions include threonine 327, glycine 361, 391–394 (RLYS), 409–411 (TVG), tyrosine 415, and 424–427 (GGAS). NADP(+) is bound by residues 524–525 (SR), 530–534 (KVYVQ), and aspartate 566. FAD is bound at residue tyrosine 604.

This sequence belongs to the NADPH-dependent sulphite reductase flavoprotein subunit CysJ family. In the N-terminal section; belongs to the flavodoxin family. The protein in the C-terminal section; belongs to the flavoprotein pyridine nucleotide cytochrome reductase family. Alpha(8)-beta(8). The alpha component is a flavoprotein, the beta component is a hemoprotein. The cofactor is FAD. FMN serves as cofactor.

It catalyses the reaction hydrogen sulfide + 3 NADP(+) + 3 H2O = sulfite + 3 NADPH + 4 H(+). It functions in the pathway sulfur metabolism; hydrogen sulfide biosynthesis; hydrogen sulfide from sulfite (NADPH route): step 1/1. Its function is as follows. Component of the sulfite reductase complex that catalyzes the 6-electron reduction of sulfite to sulfide. This is one of several activities required for the biosynthesis of L-cysteine from sulfate. The flavoprotein component catalyzes the electron flow from NADPH -&gt; FAD -&gt; FMN to the hemoprotein component. In Aliivibrio fischeri (strain ATCC 700601 / ES114) (Vibrio fischeri), this protein is Sulfite reductase [NADPH] flavoprotein alpha-component.